A 132-amino-acid polypeptide reads, in one-letter code: Small ribosomal subunit protein bS6 (132 aa).

Residues 99–132 (ASPMVKAKDERRGDRREDFANETADDADAGDSEE) are disordered. The span at 104-117 (KAKDERRGDRREDF) shows a compositional bias: basic and acidic residues. Residues 121-132 (TADDADAGDSEE) show a composition bias toward acidic residues.

The protein belongs to the bacterial ribosomal protein bS6 family.

Its function is as follows. Binds together with bS18 to 16S ribosomal RNA. The chain is Small ribosomal subunit protein bS6 from Serratia proteamaculans (strain 568).